The chain runs to 397 residues: ATP-dependent RNA helicase eIF4A (397 aa).

The Q motif motif lies at 24–52; it reads DSFDEMNLKPELLRGIYAYGFERPSAIQQ. Residues 55–225 enclose the Helicase ATP-binding domain; that stretch reads IMPVIKGHDV…TKFMREPVRI (171 aa). 68–75 lines the ATP pocket; that stretch reads AQSGTGKT. The DEAD box motif lies at 173 to 176; sequence DEAD. In terms of domain architecture, Helicase C-terminal spans 236–397; sequence GIKQFYIAVE…EMPMNVADLI (162 aa).

This sequence belongs to the DEAD box helicase family. eIF4A subfamily. As to quaternary structure, component of the eIF4F complex, which composition varies with external and internal environmental conditions. It is composed of at least eIF4A, eIF4E and eIF4G.

It localises to the cytoplasm. The enzyme catalyses ATP + H2O = ADP + phosphate + H(+). Functionally, ATP-dependent RNA helicase which is a subunit of the eIF4F complex involved in cap recognition and is required for mRNA binding to ribosome. In the current model of translation initiation, eIF4A unwinds RNA secondary structures in the 5'-UTR of mRNAs which is necessary to allow efficient binding of the small ribosomal subunit, and subsequent scanning for the initiator codon. This chain is ATP-dependent RNA helicase eIF4A (tif-1), found in Neurospora crassa (strain ATCC 24698 / 74-OR23-1A / CBS 708.71 / DSM 1257 / FGSC 987).